A 126-amino-acid chain; its full sequence is Histone H2B type 1-K (126 aa).

The segment covering 1–12 (MPEPAKSAPAPK) has biased composition (low complexity). Residues 1 to 36 (MPEPAKSAPAPKKGSKKAVTKAQKIDGKKRKRSRKE) are disordered. Pro-2 carries the N-acetylproline modification. Glu-3 is subject to ADP-ribosyl glutamic acid. Position 6 is an N6-(2-hydroxyisobutyryl)lysine; alternate (Lys-6). Lys-6 bears the N6-(beta-hydroxybutyryl)lysine; alternate mark. Lys-6 is subject to N6-acetyllysine; alternate. N6-butyryllysine; alternate is present on Lys-6. Lys-6 carries the N6-crotonyllysine; alternate modification. An N6-lactoyllysine; alternate modification is found at Lys-6. Residue Lys-6 forms a Glycyl lysine isopeptide (Lys-Gly) (interchain with G-Cter in SUMO2); alternate linkage. Residue Ser-7 is modified to ADP-ribosylserine. Lys-12 is subject to N6-(beta-hydroxybutyryl)lysine; alternate. Residues Lys-12 and Lys-13 each carry the N6-acetyllysine; alternate modification. An N6-crotonyllysine; alternate mark is found at Lys-12 and Lys-13. Lys-12 carries the N6-lactoyllysine; alternate modification. Lys-13 is modified (N6-(2-hydroxyisobutyryl)lysine; alternate). Ser-15 carries the phosphoserine; by STK4/MST1 modification. N6-acetyllysine; alternate is present on residues Lys-16, Lys-17, Lys-21, and Lys-24. 5 positions are modified to N6-crotonyllysine; alternate: Lys-16, Lys-17, Lys-21, Lys-24, and Lys-35. N6-lactoyllysine; alternate is present on residues Lys-16, Lys-17, Lys-21, and Lys-24. N6-glutaryllysine; alternate is present on Lys-17. An N6-(2-hydroxyisobutyryl)lysine; alternate mark is found at Lys-21, Lys-24, and Lys-35. Lys-21 is subject to N6-(beta-hydroxybutyryl)lysine; alternate. Lys-21 carries the N6-butyryllysine; alternate modification. A Glycyl lysine isopeptide (Lys-Gly) (interchain with G-Cter in SUMO2); alternate cross-link involves residue Lys-21. Lys-35 is subject to N6-(beta-hydroxybutyryl)lysine; alternate. Lys-35 bears the N6-glutaryllysine; alternate mark. N6-succinyllysine; alternate is present on Lys-35. A Glycyl lysine isopeptide (Lys-Gly) (interchain with G-Cter in ubiquitin); alternate cross-link involves residue Lys-35. A PolyADP-ribosyl glutamic acid modification is found at Glu-36. Ser-37 carries the phosphoserine; by AMPK modification. N6-(2-hydroxyisobutyryl)lysine; alternate is present on residues Lys-44, Lys-47, and Lys-58. Residue Lys-44 is modified to N6-lactoyllysine; alternate. Residues Lys-44 and Lys-47 each carry the N6-glutaryllysine; alternate modification. The residue at position 47 (Lys-47) is an N6-methyllysine; alternate. Lys-58 carries the post-translational modification N6,N6-dimethyllysine; alternate. At Arg-80 the chain carries Dimethylated arginine. Lys-86 is subject to N6-(2-hydroxyisobutyryl)lysine; alternate. Lys-86 is subject to N6-acetyllysine; alternate. Lys-86 is modified (N6-lactoyllysine; alternate). Lys-86 carries the post-translational modification N6,N6,N6-trimethyllysine; alternate. Omega-N-methylarginine occurs at positions 87 and 93. An N6-(2-hydroxyisobutyryl)lysine; alternate modification is found at Lys-109. Lys-109 carries the post-translational modification N6-lactoyllysine; alternate. Lys-109 is modified (N6-glutaryllysine; alternate). Position 109 is an N6-methyllysine; alternate (Lys-109). O-linked (GlcNAc) serine glycosylation is present at Ser-113. Phosphothreonine is present on Thr-116. An N6-(2-hydroxyisobutyryl)lysine; alternate mark is found at Lys-117 and Lys-121. At Lys-117 the chain carries N6-(beta-hydroxybutyryl)lysine; alternate. An N6-lactoyllysine; alternate mark is found at Lys-117 and Lys-121. 2 positions are modified to N6-glutaryllysine; alternate: Lys-117 and Lys-121. N6-succinyllysine; alternate occurs at positions 117 and 121. At Lys-117 the chain carries N6-methylated lysine; alternate. Residue Lys-121 forms a Glycyl lysine isopeptide (Lys-Gly) (interchain with G-Cter in ubiquitin); alternate linkage.

Belongs to the histone H2B family. In terms of assembly, the nucleosome is a histone octamer containing two molecules each of H2A, H2B, H3 and H4 assembled in one H3-H4 heterotetramer and two H2A-H2B heterodimers. The octamer wraps approximately 147 bp of DNA. Post-translationally, monoubiquitination at Lys-35 (H2BK34Ub) by the MSL1/MSL2 dimer is required for histone H3 'Lys-4' (H3K4me) and 'Lys-79' (H3K79me) methylation and transcription activation at specific gene loci, such as HOXA9 and MEIS1 loci. Similarly, monoubiquitination at Lys-121 (H2BK120Ub) by the RNF20/40 complex gives a specific tag for epigenetic transcriptional activation and is also prerequisite for histone H3 'Lys-4' and 'Lys-79' methylation. It also functions cooperatively with the FACT dimer to stimulate elongation by RNA polymerase II. H2BK120Ub also acts as a regulator of mRNA splicing: deubiquitination by USP49 is required for efficient cotranscriptional splicing of a large set of exons. Phosphorylated on Ser-15 (H2BS14ph) by STK4/MST1 during apoptosis; which facilitates apoptotic chromatin condensation. Also phosphorylated on Ser-15 in response to DNA double strand breaks (DSBs), and in correlation with somatic hypermutation and immunoglobulin class-switch recombination. Phosphorylation at Ser-37 (H2BS36ph) by AMPK in response to stress promotes transcription. In terms of processing, glcNAcylation at Ser-113 promotes monoubiquitination of Lys-121. It fluctuates in response to extracellular glucose, and associates with transcribed genes. Post-translationally, ADP-ribosylated by PARP1 or PARP2 on Ser-7 (H2BS6ADPr) in response to DNA damage. H2BS6ADPr promotes recruitment of CHD1L. Mono-ADP-ribosylated on Glu-3 (H2BE2ADPr) by PARP3 in response to single-strand breaks. Poly ADP-ribosylation on Glu-36 (H2BE35ADPr) by PARP1 regulates adipogenesis: it inhibits phosphorylation at Ser-37 (H2BS36ph), thereby blocking expression of pro-adipogenetic genes. Crotonylation (Kcr) is specifically present in male germ cells and marks testis-specific genes in post-meiotic cells, including X-linked genes that escape sex chromosome inactivation in haploid cells. Crotonylation marks active promoters and enhancers and confers resistance to transcriptional repressors. It is also associated with post-meiotically activated genes on autosomes. In terms of processing, lactylated in macrophages by EP300/P300 by using lactoyl-CoA directly derived from endogenous or exogenous lactate, leading to stimulates gene transcription.

The protein resides in the nucleus. It localises to the chromosome. Its function is as follows. Core component of nucleosome. Nucleosomes wrap and compact DNA into chromatin, limiting DNA accessibility to the cellular machineries which require DNA as a template. Histones thereby play a central role in transcription regulation, DNA repair, DNA replication and chromosomal stability. DNA accessibility is regulated via a complex set of post-translational modifications of histones, also called histone code, and nucleosome remodeling. This Bos taurus (Bovine) protein is Histone H2B type 1-K.